The following is a 472-amino-acid chain: Radical SAM cyclopropyl synthase TigE (472 aa).

Positions 106 to 331 (GEQIKAIQLV…VIDLYEYGLD (226 aa)) constitute a Radical SAM core domain. Residues cysteine 120, cysteine 124, cysteine 127, tyrosine 339, cysteine 360, cysteine 378, cysteine 414, cysteine 417, cysteine 423, cysteine 427, and cysteine 446 each contribute to the [4Fe-4S] cluster site.

This sequence belongs to the radical SAM superfamily. [4Fe-4S] cluster is required as a cofactor.

It catalyses the reaction L-isoleucyl-[protein] + AH2 + 2 S-adenosyl-L-methionine = methylcyclopropylglycine-[protein] + 2 5'-deoxyadenosine + 2 L-methionine + A + 2 H(+). Radical S-adenosylmethionine (SAM) enzyme that catalyzes the formation of methylcyclopropylglycine (mCPG) residues from isoleucine residues residing in the repeating TIGSVS motif of the precursor peptide TigB. Is thus involved in the maturation of a ribosomally synthesized and post-translationally modified peptide (RiPP). The sequence is that of Radical SAM cyclopropyl synthase TigE from Paramaledivibacter caminithermalis (strain DSM 15212 / CIP 107654 / DViRD3) (Clostridium caminithermale).